The sequence spans 476 residues: Ataxin-10 (476 aa).

R10 carries the omega-N-methylarginine modification. 2 positions are modified to phosphoserine: S13 and S78. Position 83 is a phosphothreonine (T83). Residue S431 is modified to Phosphoserine.

It belongs to the ataxin-10 family. Homooligomer. Interacts with GNB2. Interacts with IQCB1. Interacts with OGT. Polyubiquitinated. Post-translationally, phosphorylation at Ser-13 by AURKB promotes the association of ATXN10 with PLK1. Phosphorylation at Ser-78 and Thr-83 by PLK1 may play a role in the regulation of cytokinesis and may stimulate the proteasome-mediated degradation of ATXN10.

Its subcellular location is the cytoplasm. It is found in the perinuclear region. The protein resides in the midbody. It localises to the cytoskeleton. The protein localises to the cilium basal body. Its subcellular location is the microtubule organizing center. It is found in the centrosome. The protein resides in the centriole. In terms of biological role, may play a role in the regulation of cytokinesis. May play a role in signaling by stimulating protein glycosylation. Induces neuritogenesis by activating the Ras-MAP kinase pathway and is necessary for the survival of cerebellar neurons. Does not appear to play a major role in ciliogenesis. The polypeptide is Ataxin-10 (ATXN10) (Pongo abelii (Sumatran orangutan)).